Consider the following 425-residue polypeptide: Probable threonylcarbamoyladenosine tRNA methylthiotransferase (425 aa).

The MTTase N-terminal domain maps to 2–110 (VKVYIENYGC…IVQAVEYAMR (109 aa)). 6 residues coordinate [4Fe-4S] cluster: Cys11, Cys47, Cys76, Cys148, Cys152, and Cys155. The Radical SAM core domain maps to 134-363 (SPRNVYFILP…HRIRLQISYE (230 aa)). Positions 366-425 (RKYIGKKVKVLIHGEGKKGNVDAVTMNYKHIILPEGRKGEFREARVKNAASTYLLGEIIT) constitute a TRAM domain.

This sequence belongs to the methylthiotransferase family. CDKAL1 subfamily. Requires [4Fe-4S] cluster as cofactor.

It catalyses the reaction N(6)-L-threonylcarbamoyladenosine(37) in tRNA + (sulfur carrier)-SH + AH2 + 2 S-adenosyl-L-methionine = 2-methylsulfanyl-N(6)-L-threonylcarbamoyladenosine(37) in tRNA + (sulfur carrier)-H + 5'-deoxyadenosine + L-methionine + A + S-adenosyl-L-homocysteine + 2 H(+). Catalyzes the methylthiolation of N6-threonylcarbamoyladenosine (t(6)A), leading to the formation of 2-methylthio-N6-threonylcarbamoyladenosine (ms(2)t(6)A) at position 37 in tRNAs that read codons beginning with adenine. In Pyrococcus horikoshii (strain ATCC 700860 / DSM 12428 / JCM 9974 / NBRC 100139 / OT-3), this protein is Probable threonylcarbamoyladenosine tRNA methylthiotransferase.